Here is a 353-residue protein sequence, read N- to C-terminus: Photosystem II D2 protein (353 aa).

N-acetylthreonine is present on Thr-2. A Phosphothreonine modification is found at Thr-2. A helical membrane pass occupies residues 41–61; it reads CAYFALGGWFTGTTFVTSWYT. A chlorophyll a-binding site is contributed by His-118. The helical transmembrane segment at 125–141 threads the bilayer; that stretch reads GFMLRQFELARSVQLRP. The pheophytin a site is built by Gln-130 and Asn-143. A helical membrane pass occupies residues 153-166; the sequence is VFVSVFLIYPLGQS. Chlorophyll a is bound at residue His-198. The helical transmembrane segment at 208–228 threads the bilayer; that stretch reads AALLCAIHGATVENTLFEDGD. 2 residues coordinate a plastoquinone: His-215 and Phe-262. His-215 serves as a coordination point for Fe cation. His-269 contributes to the Fe cation binding site. The chain crosses the membrane as a helical span at residues 279-295; the sequence is GSWMSAIGVVGLALNLR.

The protein belongs to the reaction center PufL/M/PsbA/D family. As to quaternary structure, PSII is composed of 1 copy each of membrane proteins PsbA, PsbB, PsbC, PsbD, PsbE, PsbF, PsbH, PsbI, PsbJ, PsbK, PsbL, PsbM, PsbT, PsbX, PsbY, PsbZ, Psb30/Ycf12, at least 3 peripheral proteins of the oxygen-evolving complex and a large number of cofactors. It forms dimeric complexes. The D1/D2 heterodimer binds P680, chlorophylls that are the primary electron donor of PSII, and subsequent electron acceptors. It shares a non-heme iron and each subunit binds pheophytin, quinone, additional chlorophylls, carotenoids and lipids. There is also a Cl(-1) ion associated with D1 and D2, which is required for oxygen evolution. The PSII complex binds additional chlorophylls, carotenoids and specific lipids. serves as cofactor.

It localises to the plastid. It is found in the chloroplast thylakoid membrane. The catalysed reaction is 2 a plastoquinone + 4 hnu + 2 H2O = 2 a plastoquinol + O2. In terms of biological role, photosystem II (PSII) is a light-driven water:plastoquinone oxidoreductase that uses light energy to abstract electrons from H(2)O, generating O(2) and a proton gradient subsequently used for ATP formation. It consists of a core antenna complex that captures photons, and an electron transfer chain that converts photonic excitation into a charge separation. The D1/D2 (PsbA/PsbD) reaction center heterodimer binds P680, the primary electron donor of PSII as well as several subsequent electron acceptors. D2 is needed for assembly of a stable PSII complex. This is Photosystem II D2 protein from Pinus koraiensis (Korean pine).